The sequence spans 436 residues: Na(+)/H(+) antiporter NhaA 2 (436 aa).

The next 11 membrane-spanning stretches (helical) occupy residues F35–W55, L80–L100, A116–I136, G147–G167, A176–F196, F201–Q221, W226–V246, V283–G303, P313–S333, L354–L374, and V385–S405.

The protein belongs to the NhaA Na(+)/H(+) (TC 2.A.33) antiporter family.

The protein localises to the cell membrane. The enzyme catalyses Na(+)(in) + 2 H(+)(out) = Na(+)(out) + 2 H(+)(in). Its function is as follows. Na(+)/H(+) antiporter that extrudes sodium in exchange for external protons. The sequence is that of Na(+)/H(+) antiporter NhaA 2 from Salinispora arenicola (strain CNS-205).